We begin with the raw amino-acid sequence, 117 residues long: Big defensin (117 aa).

An N-terminal signal peptide occupies residues 1-23 (MEKKTAYCLLFLVLLVPYTALGA). Residues 24–33 (VLKRAPAKKE) constitute a propeptide that is removed on maturation. Disulfide bonds link Cys82-Cys112, Cys89-Cys107, and Cys93-Cys113.

Belongs to the big defensin family.

Its subcellular location is the secreted. Its function is as follows. Significantly inhibits the growth of Gram-negative and Gram-positive bacteria and fungi in vitro. The chain is Big defensin from Branchiostoma belcheri (Amphioxus).